The following is a 500-amino-acid chain: Putative (R)-citramalate synthase CimA (500 aa).

Positions 9-258 (LRFFDTTLRD…DTRIRTERLY (250 aa)) constitute a Pyruvate carboxyltransferase domain.

Belongs to the alpha-IPM synthase/homocitrate synthase family. Homodimer.

It catalyses the reaction pyruvate + acetyl-CoA + H2O = (3R)-citramalate + CoA + H(+). Its pathway is amino-acid biosynthesis; L-isoleucine biosynthesis; 2-oxobutanoate from pyruvate: step 1/3. Its function is as follows. Catalyzes the condensation of pyruvate and acetyl-coenzyme A to form (R)-citramalate. This Methanosphaerula palustris (strain ATCC BAA-1556 / DSM 19958 / E1-9c) protein is Putative (R)-citramalate synthase CimA.